A 732-amino-acid polypeptide reads, in one-letter code: Acylamino-acid-releasing enzyme (732 aa).

The residue at position 1 (Met-1) is a Blocked amino end (Met); alternate. Residue Met-1 is modified to N-acetylmethionine; alternate. Residues Ser-185 and Ser-187 each carry the phosphoserine modification. Catalysis depends on charge relay system residues Ser-587, Asp-675, and His-707.

It belongs to the peptidase S9C family. In terms of assembly, homotetramer.

The protein resides in the cytoplasm. It catalyses the reaction Cleavage of an N-acetyl or N-formyl amino acid from the N-terminus of a polypeptide.. Homotetramerization is required for activity. Tetramerization results in the formation of a gated channel which is involved in substrate selection and substrate access to the catalytic sites. Its function is as follows. This enzyme catalyzes the hydrolysis of the N-terminal peptide bond of an N-acetylated peptide to generate an N-acetylated amino acid and a peptide with a free N-terminus. It preferentially cleaves off Ac-Ala, Ac-Met and Ac-Ser. Also, involved in the degradation of oxidized and glycated proteins. The protein is Acylamino-acid-releasing enzyme (Apeh) of Rattus norvegicus (Rat).